We begin with the raw amino-acid sequence, 206 residues long: Ectodysplasin-A receptor-associated adapter protein (206 aa).

Disordered regions lie at residues 1 to 36 (MRPLQSYKAFEDHMAQEPVEDTDPSTLSFNTSDKYP) and 52 to 77 (TLNCPPNSDMKNQGEENGFPDSTGDP). 2 stretches are compositionally biased toward polar residues: residues 24–33 (PSTLSFNTSD) and 52–62 (TLNCPPNSDMK). Positions 114 to 190 (DVIRIKLDPC…DVEKVLRRWV (77 aa)) constitute a Death domain.

As to quaternary structure, self-associates and binds to EDAR, TRAF1, TRAF2 and TRAF3.

The protein resides in the cytoplasm. Its function is as follows. Adapter protein that interacts with EDAR DEATH domain and couples the receptor to EDA signaling pathway during morphogenesis of ectodermal organs. Mediates the activation of NF-kappa-B. The sequence is that of Ectodysplasin-A receptor-associated adapter protein (EDARADD) from Macaca fascicularis (Crab-eating macaque).